Here is a 94-residue protein sequence, read N- to C-terminus: Acylphosphatase (94 aa).

The region spanning 8-94 (TLFIIVHGKV…GRRFKHFAQH (87 aa)) is the Acylphosphatase-like domain. Active-site residues include R23 and N41. Positions 69 to 94 (PPAASVTELESRREDGGRRFKHFAQH) are disordered. Positions 77-86 (LESRREDGGR) are enriched in basic and acidic residues.

The protein belongs to the acylphosphatase family.

It carries out the reaction an acyl phosphate + H2O = a carboxylate + phosphate + H(+). The sequence is that of Acylphosphatase (acyP) from Bordetella avium (strain 197N).